Reading from the N-terminus, the 396-residue chain is Cell division protein DivIB (396 aa).

2 disordered regions span residues 1–23 (MSKD…SEWQ) and 37–116 (EVAL…ATKE). Residues 1-130 (MSKDKKNEDK…AKIPGIHILR (130 aa)) are Cytoplasmic-facing. Composition is skewed to basic and acidic residues over residues 37–65 (EVAL…KQDQ) and 75–116 (ESAK…ATKE). Residues 131-151 (AFTILFPSLLLLIVSAYLLSP) form a helical membrane-spanning segment. Residues 152–396 (YATMKDIRVE…NQTNQRSSRR (245 aa)) are Extracellular-facing. A POTRA domain is found at 153-223 (ATMKDIRVEG…TKFTIKVKEY (71 aa)). Residues 361 to 385 (KAKQEAKEAEKKQEEEQKKQEEESN) show a composition bias toward basic and acidic residues. Residues 361–396 (KAKQEAKEAEKKQEEEQKKQEEESNRNQTNQRSSRR) form a disordered region. The span at 386–396 (RNQTNQRSSRR) shows a compositional bias: low complexity.

This sequence belongs to the FtsQ/DivIB family. DivIB subfamily.

It localises to the cell membrane. Cell division protein that may be involved in stabilizing or promoting the assembly of the division complex. This is Cell division protein DivIB from Streptococcus pneumoniae (strain ATCC BAA-255 / R6).